Reading from the N-terminus, the 134-residue chain is MGFIQEFKDFAMRGNVVDLAVGIIIGGAFGKVVTALVDGVLMPPIGLLIGGVNFDQLAFELRAATAESAAVSLNYGAFLQTIVDFVIIAFSIFVVIKALNSLKRKSEEAPKAPPVPSKEEVLLGEIRDLLKERG.

The next 2 helical transmembrane spans lie at 10–30 and 76–96; these read FAMR…GAFG and GAFL…FVVI.

It belongs to the MscL family. Homopentamer.

Its subcellular location is the cell inner membrane. Channel that opens in response to stretch forces in the membrane lipid bilayer. May participate in the regulation of osmotic pressure changes within the cell. This is Large-conductance mechanosensitive channel from Prosthecochloris aestuarii (strain DSM 271 / SK 413).